Consider the following 396-residue polypeptide: Stearoyl-[acyl-carrier-protein] 9-desaturase, chloroplastic (396 aa).

Residues 1–33 (MALRITPVTLQSERYRSFSFPKKANLRSPKFAM) constitute a chloroplast transit peptide. The residue at position 34 (A34) is a Blocked amino end (Ala); partial. Positions 138, 176, 179, 229, 262, and 265 each coordinate Fe cation.

It belongs to the fatty acid desaturase type 2 family. Homodimer. Fe(2+) is required as a cofactor. In terms of processing, most of the N-terminus is blocked.

The protein resides in the plastid. It localises to the chloroplast. The catalysed reaction is octadecanoyl-[ACP] + 2 reduced [2Fe-2S]-[ferredoxin] + O2 + 2 H(+) = (9Z)-octadecenoyl-[ACP] + 2 oxidized [2Fe-2S]-[ferredoxin] + 2 H2O. It functions in the pathway lipid metabolism; fatty acid metabolism. Its function is as follows. Converts stearoyl-ACP to oleoyl-ACP by introduction of a cis double bond between carbons 9 and 10 of the acyl chain. The chain is Stearoyl-[acyl-carrier-protein] 9-desaturase, chloroplastic from Carthamus tinctorius (Safflower).